Here is a 438-residue protein sequence, read N- to C-terminus: Transposon Ty2-LR2 Gag polyprotein (438 aa).

3 stretches are compositionally biased toward polar residues: residues 1–11 (MESQQLHQNPH), 19–39 (ASVT…SASN), and 49–60 (KVNSQEETTPGT). 3 disordered regions span residues 1–88 (MESQ…YQQH), 364–397 (KNVS…AKAH), and 418–438 (VSSQ…TERI). Positions 295-397 (ENNINVSDRL…SSKPRAAKAH (103 aa)) are RNA-binding. Residues 369–381 (TSPNTTNTKVTTR) are compositionally biased toward low complexity.

In terms of assembly, homotrimer.

The protein localises to the cytoplasm. Capsid protein (CA) is the structural component of the virus-like particle (VLP), forming the shell that encapsulates the retrotransposons dimeric RNA genome. The particles are assembled from trimer-clustered units and there are holes in the capsid shells that allow for the diffusion of macromolecules. CA also has nucleocapsid-like chaperone activity, promoting primer tRNA(i)-Met annealing to the multipartite primer-binding site (PBS), dimerization of Ty2 RNA and initiation of reverse transcription. This Saccharomyces cerevisiae (strain ATCC 204508 / S288c) (Baker's yeast) protein is Transposon Ty2-LR2 Gag polyprotein (TY2A-LR2).